The chain runs to 83 residues: Putative regulatory protein FMG_0656 (83 aa).

Belongs to the RemA family.

The polypeptide is Putative regulatory protein FMG_0656 (Finegoldia magna (strain ATCC 29328 / DSM 20472 / WAL 2508) (Peptostreptococcus magnus)).